Reading from the N-terminus, the 1132-residue chain is Telomerase reverse transcriptase (1132 aa).

Residues 1–66 are disordered; it reads MSAKKPVQSK…NQNNANSGGN (66 aa). Composition is skewed to polar residues over residues 9-26 and 45-55; these read SKLN…NRST and QSQNTTTGAFR. The region spanning 602 to 956 is the Reverse transcriptase domain; the sequence is KEMRIFCESQ…DLFHWIGISI (355 aa). Mg(2+) contacts are provided by Asp-708, Asp-886, and Asp-887.

The protein belongs to the reverse transcriptase family. Telomerase subfamily.

It is found in the nucleus. The protein resides in the chromosome. It localises to the telomere. It catalyses the reaction DNA(n) + a 2'-deoxyribonucleoside 5'-triphosphate = DNA(n+1) + diphosphate. Functionally, telomerase is a ribonucleoprotein enzyme essential for the replication of chromosome termini in most eukaryotes. It elongates telomeres. It is a reverse transcriptase that adds simple sequence repeats to chromosome ends by copying a template sequence within the RNA component of the enzyme. This chain is Telomerase reverse transcriptase (TERT), found in Oxytricha trifallax (Sterkiella histriomuscorum).